The following is a 1082-amino-acid chain: Inner tegument protein (1082 aa).

The interval 604–1082 (DHIDCLFNIS…QQDLIAPLTF (479 aa)) is interaction with large tegument protein.

Belongs to the herpesviridae inner tegument protein family. Interacts (via C-terminus) with the large tegument protein/LTP (via N-terminus).

The protein localises to the virion tegument. Its subcellular location is the host cytoplasm. It localises to the host nucleus. It is found in the host Golgi apparatus. The protein resides in the host trans-Golgi network. In terms of biological role, plays an essential role in cytoplasmic secondary envelopment during viral egress. Interacts with the capsid via the large tegument protein/LTP and participates in its transport to the host trans-Golgi network (TGN) where secondary envelopment occurs. Modulates tegumentation and capsid accumulation at the viral assembly complex. The protein is Inner tegument protein (U30) of Homo sapiens (Human).